A 209-amino-acid polypeptide reads, in one-letter code: GTP cyclohydrolase-2 (209 aa).

GTP is bound at residue 49 to 53; sequence RIHSE. 3 residues coordinate Zn(2+): Cys54, Cys65, and Cys67. Residues Gln70, 92–94, and Thr114 contribute to the GTP site; that span reads EGR. Asp126 functions as the Proton acceptor in the catalytic mechanism. Arg128 serves as the catalytic Nucleophile. Residues Thr149 and Lys154 each contribute to the GTP site.

It belongs to the GTP cyclohydrolase II family. Zn(2+) serves as cofactor.

It catalyses the reaction GTP + 4 H2O = 2,5-diamino-6-hydroxy-4-(5-phosphoribosylamino)-pyrimidine + formate + 2 phosphate + 3 H(+). It participates in cofactor biosynthesis; riboflavin biosynthesis; 5-amino-6-(D-ribitylamino)uracil from GTP: step 1/4. In terms of biological role, catalyzes the conversion of GTP to 2,5-diamino-6-ribosylamino-4(3H)-pyrimidinone 5'-phosphate (DARP), formate and pyrophosphate. This chain is GTP cyclohydrolase-2, found in Shewanella halifaxensis (strain HAW-EB4).